Here is a 345-residue protein sequence, read N- to C-terminus: Histidinol-phosphate aminotransferase (345 aa).

Residue Lys206 is modified to N6-(pyridoxal phosphate)lysine.

Belongs to the class-II pyridoxal-phosphate-dependent aminotransferase family. Histidinol-phosphate aminotransferase subfamily. In terms of assembly, homodimer. It depends on pyridoxal 5'-phosphate as a cofactor.

It catalyses the reaction L-histidinol phosphate + 2-oxoglutarate = 3-(imidazol-4-yl)-2-oxopropyl phosphate + L-glutamate. It participates in amino-acid biosynthesis; L-histidine biosynthesis; L-histidine from 5-phospho-alpha-D-ribose 1-diphosphate: step 7/9. This is Histidinol-phosphate aminotransferase from Bacteroides fragilis (strain YCH46).